The chain runs to 350 residues: GTPase Obg (350 aa).

Residues 1–158 (MFIDSVKITL…RLVRLELKLI (158 aa)) enclose the Obg domain. One can recognise an OBG-type G domain in the interval 159–339 (ADVGLVGFPN…LKFMLLEEIK (181 aa)). Residues 165 to 172 (GFPNVGKS), 190 to 194 (FTTLT), 212 to 215 (DIPG), 280 to 283 (SKSD), and 320 to 322 (SSL) each bind GTP. 2 residues coordinate Mg(2+): S172 and T192.

The protein belongs to the TRAFAC class OBG-HflX-like GTPase superfamily. OBG GTPase family. Monomer. The cofactor is Mg(2+).

The protein resides in the cytoplasm. Functionally, an essential GTPase which binds GTP, GDP and possibly (p)ppGpp with moderate affinity, with high nucleotide exchange rates and a fairly low GTP hydrolysis rate. Plays a role in control of the cell cycle, stress response, ribosome biogenesis and in those bacteria that undergo differentiation, in morphogenesis control. This chain is GTPase Obg, found in Campylobacter jejuni (strain RM1221).